Consider the following 403-residue polypeptide: MSLVNPHGREKILKPLLLSGQALQNEQERAKSMARVTLSSRETGDLIMLGIGGFTPLSGFMGYEDWKGSVEECKLADGTFWPIPITLSTTKEQADKLKIGAEVALVDEESGETMGSMTIEEKYAIDKSHECREVFKTDDPKHPGVLMVMNQGDVNLGGSVKVFSEGSFPSEFEGIYMTPAQTRKMFEDNGWSTVAAFQTRNPMHRSHEYLVKIAIEICDGVLIHQLLGKLKPGDIPADVRRDCINVLMDNYFVKGTCIQGGYPLDMRYAGPREALLHALFRQNFGCSHLIVGRDHAGVGDYYGPFDAHYIFDQIPKDALETKPLKIDWTFYCYKCDGMASMKTCPHTNEDRLNVSGTKLRKMLSEGEEVPEHFSRPEVLEVLHRYYATLTEKVDIGLQTNTGG.

This sequence belongs to the sulfate adenylyltransferase family.

The catalysed reaction is sulfate + ATP + H(+) = adenosine 5'-phosphosulfate + diphosphate. Its pathway is sulfur metabolism; hydrogen sulfide biosynthesis; sulfite from sulfate: step 1/3. The chain is Sulfate adenylyltransferase from Pelodictyon phaeoclathratiforme (strain DSM 5477 / BU-1).